The following is a 273-amino-acid chain: uncharacterized protein (273 aa).

This is an uncharacterized protein from Acanthamoeba polyphaga mimivirus (APMV).